The sequence spans 274 residues: Penicillin-insensitive murein endopeptidase (274 aa).

The first 19 residues, 1-19, serve as a signal peptide directing secretion; sequence MNKTAIALLALLASSASLA. 3 cysteine pairs are disulfide-bonded: Cys-44–Cys-265, Cys-187–Cys-235, and Cys-216–Cys-223. Zn(2+)-binding residues include His-110, His-113, Asp-120, Asp-147, His-150, and His-211. The segment at 227 to 274 is disordered; that stretch reads PLPPPGDGCGAELQSWFEPPKPGTTKPEKKTPPPLPPSCQALLDEHVI.

Belongs to the peptidase M74 family. Dimer. Requires Zn(2+) as cofactor.

Its subcellular location is the periplasm. Its function is as follows. Murein endopeptidase that cleaves the D-alanyl-meso-2,6-diamino-pimelyl amide bond that connects peptidoglycan strands. Likely plays a role in the removal of murein from the sacculus. This is Penicillin-insensitive murein endopeptidase from Escherichia coli O1:K1 / APEC.